Consider the following 237-residue polypeptide: 7-cyano-7-deazaguanine synthase (237 aa).

ATP is bound at residue 9–19 (YSGGLDSTTCL). 4 residues coordinate Zn(2+): Cys189, Cys199, Cys202, and Cys205.

It belongs to the QueC family. The cofactor is Zn(2+).

The enzyme catalyses 7-carboxy-7-deazaguanine + NH4(+) + ATP = 7-cyano-7-deazaguanine + ADP + phosphate + H2O + H(+). It functions in the pathway purine metabolism; 7-cyano-7-deazaguanine biosynthesis. In terms of biological role, catalyzes the ATP-dependent conversion of 7-carboxy-7-deazaguanine (CDG) to 7-cyano-7-deazaguanine (preQ(0)). This Geobacter metallireducens (strain ATCC 53774 / DSM 7210 / GS-15) protein is 7-cyano-7-deazaguanine synthase.